A 144-amino-acid chain; its full sequence is Large ribosomal subunit protein uL22 (144 aa).

The segment at 1 to 38 is disordered; the sequence is MAETQTTKKGAKRVRQPVPARRSKPNRPAKAAPGPHAS. Over residues 9-27 the composition is skewed to basic residues; sequence KGAKRVRQPVPARRSKPNR.

Belongs to the universal ribosomal protein uL22 family. Part of the 50S ribosomal subunit.

In terms of biological role, this protein binds specifically to 23S rRNA; its binding is stimulated by other ribosomal proteins, e.g. L4, L17, and L20. It is important during the early stages of 50S assembly. It makes multiple contacts with different domains of the 23S rRNA in the assembled 50S subunit and ribosome. Its function is as follows. The globular domain of the protein is located near the polypeptide exit tunnel on the outside of the subunit, while an extended beta-hairpin is found that lines the wall of the exit tunnel in the center of the 70S ribosome. This Anaeromyxobacter sp. (strain Fw109-5) protein is Large ribosomal subunit protein uL22.